The chain runs to 581 residues: Metal transporter Nramp7.1 (581 aa).

2 N-linked (GlcNAc...) asparagine glycosylation sites follow: asparagine 11 and asparagine 19. 7 helical membrane-spanning segments follow: residues 57 to 77 (FLSY…PGNL), 90 to 110 (ELLW…SLAA), 146 to 166 (YCLW…EGII), 181 to 201 (LLIG…WVGV), 224 to 244 (LLIA…MSYV), 270 to 290 (IALL…ALVL), and 307 to 327 (YFLI…LAVI). A glycan (N-linked (GlcNAc...) asparagine) is linked at asparagine 338. 5 helical membrane-spanning segments follow: residues 370-390 (IYAI…TYAG), 409-429 (LVTR…GGSS), 434-454 (LIII…FALI), 473-493 (IYII…NIYY), and 513-533 (VFIG…VIYL). The segment at 551 to 581 (PQQQANMENGLGPEMERVPYREDLADIPLPE) is disordered. Positions 564 to 574 (EMERVPYREDL) are enriched in basic and acidic residues.

This sequence belongs to the NRAMP (TC 2.A.55) family.

It localises to the membrane. Probable divalent metal transporter. The sequence is that of Metal transporter Nramp7.1 from Populus trichocarpa (Western balsam poplar).